We begin with the raw amino-acid sequence, 277 residues long: Inositol monophosphatase 1 (277 aa).

Mg(2+) is bound by residues Glu70, Asp90, Ile92, and Asp93. Glu70 provides a ligand contact to substrate. Position 92–95 (92–95 (IDGT)) interacts with substrate. Thr168 is subject to Phosphothreonine. Substrate contacts are provided by residues 194 to 196 (GTA), Glu213, and Asp220. A Mg(2+)-binding site is contributed by Asp220.

It belongs to the inositol monophosphatase superfamily. In terms of assembly, homodimer. It depends on Mg(2+) as a cofactor.

Its subcellular location is the cytoplasm. It catalyses the reaction a myo-inositol phosphate + H2O = myo-inositol + phosphate. The catalysed reaction is 1D-myo-inositol 1-phosphate + H2O = myo-inositol + phosphate. The enzyme catalyses 1D-myo-inositol 2-phosphate + H2O = myo-inositol + phosphate. It carries out the reaction 1D-myo-inositol 3-phosphate + H2O = myo-inositol + phosphate. It catalyses the reaction 1D-myo-inositol 4-phosphate + H2O = myo-inositol + phosphate. The catalysed reaction is 1D-myo-inositol 5-phosphate + H2O = myo-inositol + phosphate. The enzyme catalyses 1D-myo-inositol 6-phosphate + H2O = myo-inositol + phosphate. It carries out the reaction scyllo-inositol 1-phosphate + H2O = scyllo-inositol + phosphate. It catalyses the reaction alpha-D-galactose 1-phosphate + H2O = D-galactose + phosphate. The catalysed reaction is alpha-D-glucose 1-phosphate + H2O = D-glucose + phosphate. The enzyme catalyses D-glucose 6-phosphate + H2O = D-glucose + phosphate. It carries out the reaction beta-D-fructose 1-phosphate + H2O = D-fructose + phosphate. It catalyses the reaction glycerol 2-phosphate + H2O = glycerol + phosphate. The catalysed reaction is adenosine 2'-phosphate + H2O = adenosine + phosphate. It participates in polyol metabolism; myo-inositol biosynthesis; myo-inositol from D-glucose 6-phosphate: step 2/2. With respect to regulation, activity with myo-inositol monophosphates and D-galactose 1-phosphate is inhibited by Li(+), Ca(2+) and Mn(2+), but also by Mg(2+) at concentrations above 3 mM. Functionally, phosphatase involved in the dephosphorylation of myo-inositol monophosphates to generate myo-inositol. Is also able to dephosphorylate scyllo-inositol-phosphate, myo-inositol 1,4-diphosphate, scyllo-inositol-1,3-diphosphate and scyllo-inositol-1,4-diphosphate. Also dephosphorylates in vitro other sugar-phosphates including D-galactose-1-phosphate, glucose-1-phosphate, glucose-6-phosphate, fructose-1-phosphate, beta-glycerophosphate and 2'-AMP. Responsible for the provision of inositol required for synthesis of phosphatidylinositols and polyphosphoinositides, and involved in maintaining normal brain function. Has been implicated as the pharmacological target for lithium (Li(+)) action in brain, which is used to treat bipolar affective disorder. Is equally active with 1D-myo-inositol 1-phosphate, 1D-myo-inositol 3-phosphate and D-galactose 1-phosphate. This is Inositol monophosphatase 1 from Homo sapiens (Human).